A 247-amino-acid polypeptide reads, in one-letter code: UPF0259 membrane protein BUAP5A_271 (247 aa).

6 consecutive transmembrane segments (helical) span residues Ile-20–Phe-40, Ile-85–Val-105, Ile-114–Leu-134, Phe-137–Leu-157, Ile-188–Ala-208, and Leu-218–Phe-238.

Belongs to the UPF0259 family.

The protein localises to the cell membrane. The polypeptide is UPF0259 membrane protein BUAP5A_271 (Buchnera aphidicola subsp. Acyrthosiphon pisum (strain 5A)).